The following is a 333-amino-acid chain: Nucleoid-associated protein APJL_0454 (333 aa).

The protein belongs to the YejK family.

It is found in the cytoplasm. It localises to the nucleoid. This Actinobacillus pleuropneumoniae serotype 3 (strain JL03) protein is Nucleoid-associated protein APJL_0454.